The chain runs to 65 residues: uncharacterized protein (65 aa).

The protein localises to the plastid. It localises to the chloroplast. This is an uncharacterized protein from Guillardia theta (Cryptophyte).